The primary structure comprises 267 residues: Tryptophan synthase alpha chain (267 aa).

Catalysis depends on proton acceptor residues Glu-47 and Asp-58.

The protein belongs to the TrpA family. Tetramer of two alpha and two beta chains.

The catalysed reaction is (1S,2R)-1-C-(indol-3-yl)glycerol 3-phosphate + L-serine = D-glyceraldehyde 3-phosphate + L-tryptophan + H2O. The protein operates within amino-acid biosynthesis; L-tryptophan biosynthesis; L-tryptophan from chorismate: step 5/5. In terms of biological role, the alpha subunit is responsible for the aldol cleavage of indoleglycerol phosphate to indole and glyceraldehyde 3-phosphate. In Chlorobaculum tepidum (strain ATCC 49652 / DSM 12025 / NBRC 103806 / TLS) (Chlorobium tepidum), this protein is Tryptophan synthase alpha chain.